The following is an 862-amino-acid chain: Taxadiene synthase (862 aa).

The interval 45-66 (RVKMSRGSGGPGPVVMMSSSTG) is disordered. The Mg(2+) site is built by D613, D617, N757, T761, and E765. Residues 613–617 (DDMAD) carry the DDXXD motif motif.

It belongs to the terpene synthase family. Mg(2+) serves as cofactor.

It carries out the reaction (2E,6E,10E)-geranylgeranyl diphosphate = taxa-4(5),11(12)-diene + diphosphate. The protein operates within alkaloid biosynthesis; taxol biosynthesis; taxa-4(20),11-dien-5alpha-ol from geranylgeranyl diphosphate: step 1/2. In terms of biological role, catalyzes the cyclization of the ubiquitous isoprenoid intermediate geranylgeranyl diphosphate to taxa-4,11-diene, the parent olefin with a taxane skeleton. This Taxus chinensis (Chinese yew) protein is Taxadiene synthase (TDC1).